Reading from the N-terminus, the 122-residue chain is Large ribosomal subunit protein uL14 (122 aa).

This sequence belongs to the universal ribosomal protein uL14 family. Part of the 50S ribosomal subunit. Forms a cluster with proteins L3 and L19. In the 70S ribosome, L14 and L19 interact and together make contacts with the 16S rRNA in bridges B5 and B8.

Its function is as follows. Binds to 23S rRNA. Forms part of two intersubunit bridges in the 70S ribosome. This is Large ribosomal subunit protein uL14 from Borreliella burgdorferi (strain ZS7) (Borrelia burgdorferi).